A 1207-amino-acid chain; its full sequence is DNA-directed RNA polymerase subunit beta' (1207 aa).

Positions 60, 62, 75, and 78 each coordinate Zn(2+). Mg(2+) is bound by residues D450, D452, and D454. The Zn(2+) site is built by C819, C893, C900, and C903.

Belongs to the RNA polymerase beta' chain family. The RNAP catalytic core consists of 2 alpha, 1 beta, 1 beta' and 1 omega subunit. When a sigma factor is associated with the core the holoenzyme is formed, which can initiate transcription. Requires Mg(2+) as cofactor. The cofactor is Zn(2+).

The catalysed reaction is RNA(n) + a ribonucleoside 5'-triphosphate = RNA(n+1) + diphosphate. DNA-dependent RNA polymerase catalyzes the transcription of DNA into RNA using the four ribonucleoside triphosphates as substrates. The sequence is that of DNA-directed RNA polymerase subunit beta' from Streptococcus pyogenes serotype M3 (strain SSI-1).